The following is a 328-amino-acid chain: GMP reductase (328 aa).

The active-site Thioimidate intermediate is the Cys-176. 205-228 (IIADGGIRTHGDIAKSIRFGASMV) serves as a coordination point for NADP(+).

The protein belongs to the IMPDH/GMPR family. GuaC type 2 subfamily.

The enzyme catalyses IMP + NH4(+) + NADP(+) = GMP + NADPH + 2 H(+). Catalyzes the irreversible NADPH-dependent deamination of GMP to IMP. It functions in the conversion of nucleobase, nucleoside and nucleotide derivatives of G to A nucleotides, and in maintaining the intracellular balance of A and G nucleotides. The chain is GMP reductase from Streptococcus pneumoniae (strain Hungary19A-6).